We begin with the raw amino-acid sequence, 526 residues long: Bifunctional purine biosynthesis protein PurH (526 aa).

The MGS-like domain occupies 1-147 (MPSIKRALIS…KNWKHVAIVT (147 aa)).

This sequence belongs to the PurH family.

It carries out the reaction (6R)-10-formyltetrahydrofolate + 5-amino-1-(5-phospho-beta-D-ribosyl)imidazole-4-carboxamide = 5-formamido-1-(5-phospho-D-ribosyl)imidazole-4-carboxamide + (6S)-5,6,7,8-tetrahydrofolate. The enzyme catalyses IMP + H2O = 5-formamido-1-(5-phospho-D-ribosyl)imidazole-4-carboxamide. It functions in the pathway purine metabolism; IMP biosynthesis via de novo pathway; 5-formamido-1-(5-phospho-D-ribosyl)imidazole-4-carboxamide from 5-amino-1-(5-phospho-D-ribosyl)imidazole-4-carboxamide (10-formyl THF route): step 1/1. The protein operates within purine metabolism; IMP biosynthesis via de novo pathway; IMP from 5-formamido-1-(5-phospho-D-ribosyl)imidazole-4-carboxamide: step 1/1. The polypeptide is Bifunctional purine biosynthesis protein PurH (Neisseria meningitidis serogroup C / serotype 2a (strain ATCC 700532 / DSM 15464 / FAM18)).